The following is a 115-amino-acid chain: Large ribosomal subunit protein eL36 (115 aa).

It belongs to the eukaryotic ribosomal protein eL36 family. Component of the large ribosomal subunit.

It is found in the cytoplasm. Its subcellular location is the cytosol. In terms of biological role, component of the large ribosomal subunit. The protein is Large ribosomal subunit protein eL36 (RpL36) of Drosophila melanogaster (Fruit fly).